The chain runs to 219 residues: Thymidylate kinase (219 aa).

7–14 (GIDGAGKS) lines the ATP pocket.

It belongs to the thymidylate kinase family.

The catalysed reaction is dTMP + ATP = dTDP + ADP. Phosphorylation of dTMP to form dTDP in both de novo and salvage pathways of dTTP synthesis. This Chlorobium limicola (strain DSM 245 / NBRC 103803 / 6330) protein is Thymidylate kinase.